A 278-amino-acid polypeptide reads, in one-letter code: Bifunctional protein FolD (278 aa).

NADP(+) contacts are provided by residues 163 to 165, Ser-188, and Val-229; that span reads GRS.

This sequence belongs to the tetrahydrofolate dehydrogenase/cyclohydrolase family. Homodimer.

It carries out the reaction (6R)-5,10-methylene-5,6,7,8-tetrahydrofolate + NADP(+) = (6R)-5,10-methenyltetrahydrofolate + NADPH. The catalysed reaction is (6R)-5,10-methenyltetrahydrofolate + H2O = (6R)-10-formyltetrahydrofolate + H(+). The protein operates within one-carbon metabolism; tetrahydrofolate interconversion. Functionally, catalyzes the oxidation of 5,10-methylenetetrahydrofolate to 5,10-methenyltetrahydrofolate and then the hydrolysis of 5,10-methenyltetrahydrofolate to 10-formyltetrahydrofolate. This chain is Bifunctional protein FolD, found in Exiguobacterium sp. (strain ATCC BAA-1283 / AT1b).